Reading from the N-terminus, the 232-residue chain is Large ribosomal subunit protein uL1 (232 aa).

This sequence belongs to the universal ribosomal protein uL1 family. In terms of assembly, part of the 50S ribosomal subunit.

In terms of biological role, binds directly to 23S rRNA. The L1 stalk is quite mobile in the ribosome, and is involved in E site tRNA release. Protein L1 is also a translational repressor protein, it controls the translation of the L11 operon by binding to its mRNA. The polypeptide is Large ribosomal subunit protein uL1 (Mesorhizobium japonicum (strain LMG 29417 / CECT 9101 / MAFF 303099) (Mesorhizobium loti (strain MAFF 303099))).